Here is a 34-residue protein sequence, read N- to C-terminus: Cycloamanide E proprotein (34 aa).

Positions 1–10 are excised as a propeptide; sequence MSDINAARLP. The segment at residues 11–17 is a cross-link (cyclopeptide (Ser-Pro)); the sequence is SFFFPVP. A propeptide spanning residues 18–34 is cleaved from the precursor; that stretch reads CISDDIEMVLTRGESLC.

It belongs to the MSDIN fungal toxin family. Processed by the macrocyclase-peptidase enzyme POPB to yield a cyclic decapeptide. POPB first removes 10 residues from the N-terminus. Conformational trapping of the remaining peptide forces the enzyme to release this intermediate rather than proceed to macrocyclization. The enzyme rebinds the remaining peptide in a different conformation and catalyzes macrocyclization of the N-terminal 7 residues.

Functionally, cyclic heptapeptide that belongs to the MSDIN-like toxin family responsible for a large number of food poisoning cases and deaths. Cycloaminide E is structurally related to other cycloamanides that are non-toxic to mammals but show immunosuppressive activity. The sequence is that of Cycloamanide E proprotein from Amanita phalloides (Death cap).